We begin with the raw amino-acid sequence, 372 residues long: Glutamine synthetase (372 aa).

Residues 24-103 (VIAEYVWVDG…VLAECFNSDG (80 aa)) form the GS beta-grasp domain. The region spanning 110-372 (HRHEANKLFQ…KEYERETNEQ (263 aa)) is the GS catalytic domain.

It belongs to the glutamine synthetase family. Homooctamer.

Its subcellular location is the cytoplasm. The enzyme catalyses L-glutamate + NH4(+) + ATP = L-glutamine + ADP + phosphate + H(+). This Candida glabrata (strain ATCC 2001 / BCRC 20586 / JCM 3761 / NBRC 0622 / NRRL Y-65 / CBS 138) (Yeast) protein is Glutamine synthetase (GLN1).